Consider the following 208-residue polypeptide: Outer-membrane lipoprotein carrier protein (208 aa).

Positions 1–22 are cleaved as a signal peptide; that stretch reads MLKPLSQLVCALPLVVAASSYA.

Belongs to the LolA family. In terms of assembly, monomer.

The protein resides in the periplasm. Its function is as follows. Participates in the translocation of lipoproteins from the inner membrane to the outer membrane. Only forms a complex with a lipoprotein if the residue after the N-terminal Cys is not an aspartate (The Asp acts as a targeting signal to indicate that the lipoprotein should stay in the inner membrane). This chain is Outer-membrane lipoprotein carrier protein, found in Shewanella loihica (strain ATCC BAA-1088 / PV-4).